The primary structure comprises 507 residues: Histidine ammonia-lyase (507 aa).

Residues 141-143 (ASG) constitute a cross-link (5-imidazolinone (Ala-Gly)). S142 carries the 2,3-didehydroalanine (Ser) modification.

The protein belongs to the PAL/histidase family. In terms of processing, contains an active site 4-methylidene-imidazol-5-one (MIO), which is formed autocatalytically by cyclization and dehydration of residues Ala-Ser-Gly.

It localises to the cytoplasm. The catalysed reaction is L-histidine = trans-urocanate + NH4(+). The protein operates within amino-acid degradation; L-histidine degradation into L-glutamate; N-formimidoyl-L-glutamate from L-histidine: step 1/3. This chain is Histidine ammonia-lyase, found in Cereibacter sphaeroides (strain ATCC 17023 / DSM 158 / JCM 6121 / CCUG 31486 / LMG 2827 / NBRC 12203 / NCIMB 8253 / ATH 2.4.1.) (Rhodobacter sphaeroides).